A 205-amino-acid chain; its full sequence is Imidazoleglycerol-phosphate dehydratase (205 aa).

This sequence belongs to the imidazoleglycerol-phosphate dehydratase family.

It is found in the cytoplasm. It carries out the reaction D-erythro-1-(imidazol-4-yl)glycerol 3-phosphate = 3-(imidazol-4-yl)-2-oxopropyl phosphate + H2O. Its pathway is amino-acid biosynthesis; L-histidine biosynthesis; L-histidine from 5-phospho-alpha-D-ribose 1-diphosphate: step 6/9. In Chloroflexus aggregans (strain MD-66 / DSM 9485), this protein is Imidazoleglycerol-phosphate dehydratase.